A 146-amino-acid chain; its full sequence is Meiotically up-regulated gene 151 protein (146 aa).

The disordered stretch occupies residues M1–A40. Residues N21–W32 show a composition bias toward basic and acidic residues.

The protein resides in the nucleus. Its function is as follows. Has a role in meiosis. In Schizosaccharomyces pombe (strain 972 / ATCC 24843) (Fission yeast), this protein is Meiotically up-regulated gene 151 protein (mug151).